Reading from the N-terminus, the 428-residue chain is 3-phosphoshikimate 1-carboxyvinyltransferase (428 aa).

The 3-phosphoshikimate site is built by lysine 21, serine 22, and arginine 26. Lysine 21 contributes to the phosphoenolpyruvate binding site. Phosphoenolpyruvate contacts are provided by glycine 91 and arginine 119. Positions 164, 166, 313, and 340 each coordinate 3-phosphoshikimate. Glutamine 166 contacts phosphoenolpyruvate. Catalysis depends on aspartate 313, which acts as the Proton acceptor. The phosphoenolpyruvate site is built by arginine 344 and arginine 386.

Belongs to the EPSP synthase family. Monomer.

It is found in the cytoplasm. The catalysed reaction is 3-phosphoshikimate + phosphoenolpyruvate = 5-O-(1-carboxyvinyl)-3-phosphoshikimate + phosphate. It participates in metabolic intermediate biosynthesis; chorismate biosynthesis; chorismate from D-erythrose 4-phosphate and phosphoenolpyruvate: step 6/7. Its function is as follows. Catalyzes the transfer of the enolpyruvyl moiety of phosphoenolpyruvate (PEP) to the 5-hydroxyl of shikimate-3-phosphate (S3P) to produce enolpyruvyl shikimate-3-phosphate and inorganic phosphate. The chain is 3-phosphoshikimate 1-carboxyvinyltransferase from Campylobacter jejuni subsp. jejuni serotype O:6 (strain 81116 / NCTC 11828).